The following is a 233-amino-acid chain: LexA repressor (233 aa).

The segment at residues 26 to 46 (FDEMKEALDLRSKSGIHRLIT) is a DNA-binding region (H-T-H motif). Active-site for autocatalytic cleavage activity residues include Ser154 and Lys192.

The protein belongs to the peptidase S24 family. Homodimer.

It catalyses the reaction Hydrolysis of Ala-|-Gly bond in repressor LexA.. Represses a number of genes involved in the response to DNA damage (SOS response), including recA and lexA. In the presence of single-stranded DNA, RecA interacts with LexA causing an autocatalytic cleavage which disrupts the DNA-binding part of LexA, leading to derepression of the SOS regulon and eventually DNA repair. The protein is LexA repressor of Roseobacter denitrificans (strain ATCC 33942 / OCh 114) (Erythrobacter sp. (strain OCh 114)).